Consider the following 496-residue polypeptide: PE-PGRS family protein PE_PGRS1 (496 aa).

Residues Leu4 to Asn94 form the PE domain. The tract at residues Leu461–Gly480 is disordered.

It belongs to the mycobacterial PE family. PGRS subfamily.

It is found in the secreted. Its subcellular location is the cell wall. The protein localises to the host mitochondrion. In terms of biological role, when expressed in host mitochondria, induces mitochondrial stress which results in mitochondrial membrane depolarization, up-regulation of mitochondrial superoxides and release of cytochrome-C in the cytoplasm. The cytochrome-C in cytoplasm triggers the activation of caspase-9, caspase-3 and caspase-7, leading to the apoptosis of host macrophages. Being a late expressing protein, apoptosis induction by PE_PGRS1 may facilitate the M.tuberculosis survival and silent expansion of its niche at the site of granuloma. Its function is as follows. When expressed in THP-1 macrophages, promotes the survival of mycobacteria within macrophages after a 24- to 48-hour infection by blocking endoplasmic reticulum stress and inhibiting host cell apoptosis. Can chelate excessive intracellular calcium in THP-1 macrophages, which reduces the concentration of intracellular free Ca(2+) and blocks the PERK-eIF2alpha-ATF4 axis, thereby inhibiting the endoplasmic reticulum stress caused by infection. It also reduces the apoptosis of THP-1 macrophages by decreasing the activation of caspase-3 and caspase-9. This chain is PE-PGRS family protein PE_PGRS1, found in Mycobacterium tuberculosis (strain ATCC 25618 / H37Rv).